A 191-amino-acid polypeptide reads, in one-letter code: Putative manganese efflux pump MntP (191 aa).

The next 6 membrane-spanning stretches (helical) occupy residues 3–23, 37–57, 65–85, 107–129, 144–164, and 169–189; these read PISI…AAIG, LRAG…GWLL, VEAF…IHMI, WKLA…GLAF, CTLT…SMVG, and IIGG…HLHG.

Belongs to the MntP (TC 9.B.29) family.

The protein localises to the cell inner membrane. Its function is as follows. Probably functions as a manganese efflux pump. In Stenotrophomonas maltophilia (strain R551-3), this protein is Putative manganese efflux pump MntP.